We begin with the raw amino-acid sequence, 701 residues long: Centrosomal protein of 83 kDa (701 aa).

Residues 1-14 (MVVSTFTDMDTFPN) are compositionally biased toward polar residues. The segment at 1 to 23 (MVVSTFTDMDTFPNNFPPGGDSG) is disordered. Coiled coils occupy residues 40 to 634 (LRCE…SLIL) and 665 to 698 (HMQEEQHQRELSLLRKRLEELETTQRKQLEELGS). S698 bears the Phosphoserine mark.

The protein belongs to the CEP83 family. In terms of assembly, interacts with CEP164 and IFT20.

The protein resides in the cytoplasm. The protein localises to the cytoskeleton. It is found in the microtubule organizing center. Its subcellular location is the centrosome. It localises to the centriole. Functionally, component of the distal appendage region of the centriole involved in the initiation of primary cilium assembly. May collaborate with IFT20 in the trafficking of ciliary membrane proteins from the Golgi complex to the cilium during the initiation of primary cilium assembly. The polypeptide is Centrosomal protein of 83 kDa (CEP83) (Homo sapiens (Human)).